A 193-amino-acid polypeptide reads, in one-letter code: Leucyl/phenylalanyl-tRNA--protein transferase (193 aa).

This sequence belongs to the L/F-transferase family.

Its subcellular location is the cytoplasm. The catalysed reaction is N-terminal L-lysyl-[protein] + L-leucyl-tRNA(Leu) = N-terminal L-leucyl-L-lysyl-[protein] + tRNA(Leu) + H(+). The enzyme catalyses N-terminal L-arginyl-[protein] + L-leucyl-tRNA(Leu) = N-terminal L-leucyl-L-arginyl-[protein] + tRNA(Leu) + H(+). It catalyses the reaction L-phenylalanyl-tRNA(Phe) + an N-terminal L-alpha-aminoacyl-[protein] = an N-terminal L-phenylalanyl-L-alpha-aminoacyl-[protein] + tRNA(Phe). Functionally, functions in the N-end rule pathway of protein degradation where it conjugates Leu, Phe and, less efficiently, Met from aminoacyl-tRNAs to the N-termini of proteins containing an N-terminal arginine or lysine. The protein is Leucyl/phenylalanyl-tRNA--protein transferase of Gloeobacter violaceus (strain ATCC 29082 / PCC 7421).